Here is a 196-residue protein sequence, read N- to C-terminus: Nucleoside triphosphate pyrophosphatase (196 aa).

The Proton acceptor role is filled by Asp73.

This sequence belongs to the Maf family. A divalent metal cation serves as cofactor.

Its subcellular location is the cytoplasm. It catalyses the reaction a ribonucleoside 5'-triphosphate + H2O = a ribonucleoside 5'-phosphate + diphosphate + H(+). It carries out the reaction a 2'-deoxyribonucleoside 5'-triphosphate + H2O = a 2'-deoxyribonucleoside 5'-phosphate + diphosphate + H(+). Its function is as follows. Nucleoside triphosphate pyrophosphatase. May have a dual role in cell division arrest and in preventing the incorporation of modified nucleotides into cellular nucleic acids. The chain is Nucleoside triphosphate pyrophosphatase from Anaplasma marginale (strain St. Maries).